A 227-amino-acid chain; its full sequence is Octanoyltransferase (227 aa).

Residues 35-210 (DKTPDEIWLV…TFLQLVGYSA (176 aa)) enclose the BPL/LPL catalytic domain. Substrate contacts are provided by residues 74-81 (RGGQVTYH), 141-143 (SLG), and 154-156 (GLA). The active-site Acyl-thioester intermediate is Cys-172.

The protein belongs to the LipB family.

The protein resides in the cytoplasm. The enzyme catalyses octanoyl-[ACP] + L-lysyl-[protein] = N(6)-octanoyl-L-lysyl-[protein] + holo-[ACP] + H(+). Its pathway is protein modification; protein lipoylation via endogenous pathway; protein N(6)-(lipoyl)lysine from octanoyl-[acyl-carrier-protein]: step 1/2. Functionally, catalyzes the transfer of endogenously produced octanoic acid from octanoyl-acyl-carrier-protein onto the lipoyl domains of lipoate-dependent enzymes. Lipoyl-ACP can also act as a substrate although octanoyl-ACP is likely to be the physiological substrate. This Pectobacterium atrosepticum (strain SCRI 1043 / ATCC BAA-672) (Erwinia carotovora subsp. atroseptica) protein is Octanoyltransferase.